The primary structure comprises 365 residues: 3-isopropylmalate dehydrogenase (365 aa).

80 to 91 serves as a coordination point for NAD(+); sequence GPKWGTGAVRPE. The substrate site is built by Arg-98, Arg-108, Arg-137, and Asp-226. Mg(2+)-binding residues include Asp-226, Asp-251, and Asp-255. Residue 290-301 participates in NAD(+) binding; the sequence is GSAPDLPKGKVN.

The protein belongs to the isocitrate and isopropylmalate dehydrogenases family. Homodimer. Requires Mg(2+) as cofactor. Mn(2+) serves as cofactor.

It is found in the cytoplasm. It catalyses the reaction (2R,3S)-3-isopropylmalate + NAD(+) = 4-methyl-2-oxopentanoate + CO2 + NADH. It functions in the pathway amino-acid biosynthesis; L-leucine biosynthesis; L-leucine from 3-methyl-2-oxobutanoate: step 3/4. Catalyzes the oxidation of 3-carboxy-2-hydroxy-4-methylpentanoate (3-isopropylmalate) to 3-carboxy-4-methyl-2-oxopentanoate. The product decarboxylates to 4-methyl-2 oxopentanoate. In Candida glabrata (strain ATCC 2001 / BCRC 20586 / JCM 3761 / NBRC 0622 / NRRL Y-65 / CBS 138) (Yeast), this protein is 3-isopropylmalate dehydrogenase (LEU2).